The primary structure comprises 207 residues: LexA repressor (207 aa).

A DNA-binding region (H-T-H motif) is located at residues 28-48; it reads VREIGEAVGLASSSTVHGHLS. Catalysis depends on for autocatalytic cleavage activity residues Ser129 and Lys167.

It belongs to the peptidase S24 family. Homodimer.

The enzyme catalyses Hydrolysis of Ala-|-Gly bond in repressor LexA.. Its function is as follows. Represses a number of genes involved in the response to DNA damage (SOS response), including recA and lexA. In the presence of single-stranded DNA, RecA interacts with LexA causing an autocatalytic cleavage which disrupts the DNA-binding part of LexA, leading to derepression of the SOS regulon and eventually DNA repair. The protein is LexA repressor of Halalkalibacterium halodurans (strain ATCC BAA-125 / DSM 18197 / FERM 7344 / JCM 9153 / C-125) (Bacillus halodurans).